The following is a 758-amino-acid chain: 5-methyltetrahydropteroyltriglutamate--homocysteine methyltransferase (758 aa).

5-methyltetrahydropteroyltri-L-glutamate is bound by residues 16 to 19 (RELK) and Lys-116. L-homocysteine-binding positions include 436–438 (IGS) and Glu-489. Residues 436–438 (IGS) and Glu-489 contribute to the L-methionine site. Residues 520–521 (RC) and Trp-566 each bind 5-methyltetrahydropteroyltri-L-glutamate. Asp-604 provides a ligand contact to L-homocysteine. Asp-604 serves as a coordination point for L-methionine. A 5-methyltetrahydropteroyltri-L-glutamate-binding site is contributed by Glu-610. Positions 646, 648, and 670 each coordinate Zn(2+). The active-site Proton donor is the His-699. Cys-731 provides a ligand contact to Zn(2+).

The protein belongs to the vitamin-B12 independent methionine synthase family. Zn(2+) serves as cofactor.

It carries out the reaction 5-methyltetrahydropteroyltri-L-glutamate + L-homocysteine = tetrahydropteroyltri-L-glutamate + L-methionine. The protein operates within amino-acid biosynthesis; L-methionine biosynthesis via de novo pathway; L-methionine from L-homocysteine (MetE route): step 1/1. Functionally, catalyzes the transfer of a methyl group from 5-methyltetrahydrofolate to homocysteine resulting in methionine formation. The protein is 5-methyltetrahydropteroyltriglutamate--homocysteine methyltransferase of Xylella fastidiosa (strain M23).